We begin with the raw amino-acid sequence, 47 residues long: GGIAIYWGQNGNEGTLTQTCNTGKYSYVNIAFLNKFGNGQTPEINLA.

A GH18 domain is found at 1-47; the sequence is GGIAIYWGQNGNEGTLTQTCNTGKYSYVNIAFLNKFGNGQTPEINLA.

It belongs to the glycosyl hydrolase 18 family. Chitinase class II subfamily.

The protein localises to the secreted. It localises to the extracellular space. The catalysed reaction is Random endo-hydrolysis of N-acetyl-beta-D-glucosaminide (1-&gt;4)-beta-linkages in chitin and chitodextrins.. The enzyme catalyses Hydrolysis of (1-&gt;4)-beta-linkages between N-acetylmuramic acid and N-acetyl-D-glucosamine residues in a peptidoglycan and between N-acetyl-D-glucosamine residues in chitodextrins.. In terms of biological role, bifunctional enzyme with lysozyme/chitinase activity. The sequence is that of Bifunctional chitinase/lysozyme from Parthenocissus quinquefolia (Virginia creeper).